The chain runs to 146 residues: Large-conductance mechanosensitive channel (146 aa).

Transmembrane regions (helical) follow at residues 12–32 (AFAM…GGAF) and 88–108 (LQAT…IKLI).

It belongs to the MscL family. Homopentamer.

It localises to the cell inner membrane. Its function is as follows. Channel that opens in response to stretch forces in the membrane lipid bilayer. May participate in the regulation of osmotic pressure changes within the cell. The protein is Large-conductance mechanosensitive channel of Bacteroides fragilis (strain ATCC 25285 / DSM 2151 / CCUG 4856 / JCM 11019 / LMG 10263 / NCTC 9343 / Onslow / VPI 2553 / EN-2).